An 890-amino-acid polypeptide reads, in one-letter code: Translation initiation factor IF-2 (890 aa).

The disordered stretch occupies residues 45–302 (LIDHLNQKNS…SSLQQGFQKP (258 aa)). Residues 67–81 (STLNIPSTGGKSKSV) show a composition bias toward polar residues. Residues 92–217 (VKRDPQEAER…RMAEENKWTD (126 aa)) show a composition bias toward basic and acidic residues. Positions 252–266 (GRGRNAKAARPKKGN) are enriched in basic residues. A compositionally biased stretch (basic and acidic residues) spans 267 to 280 (KHAESKADREEARA). The tr-type G domain occupies 389–558 (PRAPVVTIMG…LLQAEVLELK (170 aa)). The tract at residues 398–405 (GHVDHGKT) is G1. 398–405 (GHVDHGKT) lines the GTP pocket. The tract at residues 423 to 427 (GITQH) is G2. The G3 stretch occupies residues 444–447 (DTPG). Residues 444-448 (DTPGH) and 498-501 (NKID) contribute to the GTP site. Residues 498–501 (NKID) are G4. A G5 region spans residues 534–536 (SAK). Residue lysine 808 is modified to N6-acetyllysine.

The protein belongs to the TRAFAC class translation factor GTPase superfamily. Classic translation factor GTPase family. IF-2 subfamily.

The protein resides in the cytoplasm. In terms of biological role, one of the essential components for the initiation of protein synthesis. Protects formylmethionyl-tRNA from spontaneous hydrolysis and promotes its binding to the 30S ribosomal subunits. Also involved in the hydrolysis of GTP during the formation of the 70S ribosomal complex. In Shigella dysenteriae serotype 1 (strain Sd197), this protein is Translation initiation factor IF-2.